Here is a 715-residue protein sequence, read N- to C-terminus: Fatty acid oxidation complex subunit alpha (715 aa).

Positions 1–190 are enoyl-CoA hydratase/isomerase; sequence MIYEGKAITV…KVGAVDAVVA (190 aa). Asp-297 lines the substrate pocket. A 3-hydroxyacyl-CoA dehydrogenase region spans residues 312–715; sequence HDVKQAAVLG…MAKNGQRFFN (404 aa). NAD(+)-binding positions include Met-325, Asp-344, 401-403, Lys-408, and Ser-430; that span reads VVE. The active-site For 3-hydroxyacyl-CoA dehydrogenase activity is the His-451. Position 454 (Asn-454) interacts with NAD(+). Asn-501 and Tyr-660 together coordinate substrate.

In the N-terminal section; belongs to the enoyl-CoA hydratase/isomerase family. The protein in the C-terminal section; belongs to the 3-hydroxyacyl-CoA dehydrogenase family. As to quaternary structure, heterotetramer of two alpha chains (FadB) and two beta chains (FadA).

The catalysed reaction is a (3S)-3-hydroxyacyl-CoA + NAD(+) = a 3-oxoacyl-CoA + NADH + H(+). The enzyme catalyses a (3S)-3-hydroxyacyl-CoA = a (2E)-enoyl-CoA + H2O. It catalyses the reaction a 4-saturated-(3S)-3-hydroxyacyl-CoA = a (3E)-enoyl-CoA + H2O. It carries out the reaction (3S)-3-hydroxybutanoyl-CoA = (3R)-3-hydroxybutanoyl-CoA. The catalysed reaction is a (3Z)-enoyl-CoA = a 4-saturated (2E)-enoyl-CoA. The enzyme catalyses a (3E)-enoyl-CoA = a 4-saturated (2E)-enoyl-CoA. Its pathway is lipid metabolism; fatty acid beta-oxidation. Functionally, involved in the aerobic and anaerobic degradation of long-chain fatty acids via beta-oxidation cycle. Catalyzes the formation of 3-oxoacyl-CoA from enoyl-CoA via L-3-hydroxyacyl-CoA. It can also use D-3-hydroxyacyl-CoA and cis-3-enoyl-CoA as substrate. The sequence is that of Fatty acid oxidation complex subunit alpha from Pseudomonas putida (strain ATCC 47054 / DSM 6125 / CFBP 8728 / NCIMB 11950 / KT2440).